The chain runs to 629 residues: Dihydroxy-acid dehydratase 2 (629 aa).

D82 contributes to the Mg(2+) binding site. C123 contacts [2Fe-2S] cluster. Positions 124 and 125 each coordinate Mg(2+). N6-carboxylysine is present on K125. C197 is a binding site for [2Fe-2S] cluster. E493 is a binding site for Mg(2+). The Proton acceptor role is filled by S519. Positions D603–G629 are disordered.

The protein belongs to the IlvD/Edd family. In terms of assembly, homodimer. The cofactor is [2Fe-2S] cluster. Mg(2+) is required as a cofactor.

It carries out the reaction (2R)-2,3-dihydroxy-3-methylbutanoate = 3-methyl-2-oxobutanoate + H2O. The enzyme catalyses (2R,3R)-2,3-dihydroxy-3-methylpentanoate = (S)-3-methyl-2-oxopentanoate + H2O. It participates in amino-acid biosynthesis; L-isoleucine biosynthesis; L-isoleucine from 2-oxobutanoate: step 3/4. Its pathway is amino-acid biosynthesis; L-valine biosynthesis; L-valine from pyruvate: step 3/4. Its function is as follows. Functions in the biosynthesis of branched-chain amino acids. Catalyzes the dehydration of (2R,3R)-2,3-dihydroxy-3-methylpentanoate (2,3-dihydroxy-3-methylvalerate) into 2-oxo-3-methylpentanoate (2-oxo-3-methylvalerate) and of (2R)-2,3-dihydroxy-3-methylbutanoate (2,3-dihydroxyisovalerate) into 2-oxo-3-methylbutanoate (2-oxoisovalerate), the penultimate precursor to L-isoleucine and L-valine, respectively. This is Dihydroxy-acid dehydratase 2 from Nocardia farcinica (strain IFM 10152).